The chain runs to 618 residues: Sphingomyelin phosphodiesterase 2 (618 aa).

Residues 1–22 form the signal peptide; sequence MQQPLIILGIGIVLALVSNVES. A Saposin B-type domain is found at 68-151; the sequence is RKMSCLFCTF…AFIANCGHSD (84 aa). 3 cysteine pairs are disulfide-bonded: Cys72/Cys147, Cys75/Cys140, and Cys103/Cys114. A glycan (N-linked (GlcNAc...) asparagine) is linked at Asn89. A glycan (N-linked (GlcNAc...) asparagine) is linked at Asn159. Positions 189 and 191 each coordinate Zn(2+). 2 disulfide bridges follow: Cys204-Cys216 and Cys217-Cys249. Residue Asp278 participates in Zn(2+) binding. Asn298 is a glycosylation site (N-linked (GlcNAc...) asparagine). Residues Asn318, His427, His461, and His463 each contribute to the Zn(2+) site. Cys387 and Cys435 are oxidised to a cystine. N-linked (GlcNAc...) asparagine glycosylation is found at Asn525 and Asn568. Intrachain disulfides connect Cys588–Cys594 and Cys600–Cys613.

Belongs to the acid sphingomyelinase family. Zn(2+) serves as cofactor.

The protein resides in the secreted. The enzyme catalyses a sphingomyelin + H2O = phosphocholine + an N-acylsphing-4-enine + H(+). It carries out the reaction an N-acyl-15-methylhexadecasphing-4-enine-1-phosphocholine + H2O = an N-acyl-15-methylhexadecasphing-4-enine + phosphocholine + H(+). It participates in lipid metabolism; sphingolipid metabolism. Sphingomyelin phosphodiesterase (sphingomyelinase) that converts sphingomyelin (N-acyl-sphingoid-1-phosphocholine) to ceramide (N-acyl-sphingoid base) and phosphocholine at acidic pH. Displays its enzymatic activity when secreted. May play distinct roles in signaling. The protein is Sphingomyelin phosphodiesterase 2 (asm-2) of Caenorhabditis elegans.